A 601-amino-acid chain; its full sequence is Elongation factor 4 (601 aa).

The tr-type G domain occupies 5–187 (IRKKNFCIIA…AICKHVPSPR (183 aa)). Residues 17 to 22 (DHGKST) and 134 to 137 (NKID) contribute to the GTP site.

Belongs to the TRAFAC class translation factor GTPase superfamily. Classic translation factor GTPase family. LepA subfamily.

Its subcellular location is the cell inner membrane. It carries out the reaction GTP + H2O = GDP + phosphate + H(+). Its function is as follows. Required for accurate and efficient protein synthesis under certain stress conditions. May act as a fidelity factor of the translation reaction, by catalyzing a one-codon backward translocation of tRNAs on improperly translocated ribosomes. Back-translocation proceeds from a post-translocation (POST) complex to a pre-translocation (PRE) complex, thus giving elongation factor G a second chance to translocate the tRNAs correctly. Binds to ribosomes in a GTP-dependent manner. The polypeptide is Elongation factor 4 (Borrelia garinii subsp. bavariensis (strain ATCC BAA-2496 / DSM 23469 / PBi) (Borreliella bavariensis)).